Here is an 883-residue protein sequence, read N- to C-terminus: MASPGAGRAPPELPERNCGYREVEYWDQRYQGAADSAPYDWFGDFSSFRALLEPELRPEDRILVLGCGNSALSYELFLGGFPNVTSVDYSSVVVAAMQARHAHVPQLRWETMDVRKLDFPSASFDVVLEKGTLDALLAGERDPWTVSSEGVHTVDQVLSEVGFQKGTRQLLGSRTQLELVLAGASLLLAALLLGCLVALGVQYHRDPSHSTCLTEACIRVAGKILESLDRGVSPCEDFYQFSCGGWIRRNPLPDGRSRWNTFNSLWDQNQAILKHLLENTTFNSSSEAEQKTQRFYLSCLQVERIEELGAQPLRDLIEKIGGWNITGPWDQDNFMEVLKAVAGTYRATPFFTVYISADSKSSNSNVIQVDQSGLFLPSRDYYLNRTANEKVLTAYLDYMEELGMLLGGRPTSTREQMQQVLELEIQLANITVPQDQRRDEEKIYHKMSISELQALAPSMDWLEFLSFLLSPLELSDSEPVVVYGMDYLQQVSELINRTEPSILNNYLIWNLVQKTTSSLDRRFESAQEKLLETLYGTKKSCVPRWQTCISNTDDALGFALGSLFVKATFDRQSKEIAEGMISEIRTAFEEALGQLVWMDEKTRQAAKEKADAIYDMIGFPDFILEPKELDDVYDGYEISEDSFFQNMLNLYNFSAKVMADQLRKPPSRDQWSMTPQTVNAYYLPTKNEIVFPAGILQAPFYARNHPKALNFGGIGVVMGHELTHAFDDQGREYDKEGNLRPWWQNESLAAFRNHTACMEEQYNQYQVNGERLNGRQTLGENIADNGGLKAAYNAYKAWLRKHGEEQQLPAVGLTNHQLFFVGFAQVWCSVRTPESSHEGLVTDPHSPARFRVLGTLSNSRDFLRHFGCPVGSPMNPGQLCEVW.

The methyltransferase-like region stretch occupies residues 1–160; that stretch reads MASPGAGRAP…VHTVDQVLSE (160 aa). At 1-178 the chain is on the cytoplasmic side; it reads MASPGAGRAP…QLLGSRTQLE (178 aa). Tryptophan 26 and tyrosine 30 together coordinate S-adenosyl-L-methionine. Phosphotyrosine is present on tyrosine 39. S-adenosyl-L-methionine-binding positions include tryptophan 41, glycine 66, 88–89, 113–114, and lysine 130; these read DY and DV. A helical membrane pass occupies residues 179 to 199; sequence LVLAGASLLLAALLLGCLVAL. At 200 to 883 the chain is on the lumenal side; sequence GVQYHRDPSH…MNPGQLCEVW (684 aa). The region spanning 211–883 is the Peptidase M13 domain; it reads TCLTEACIRV…MNPGQLCEVW (673 aa). 5 cysteine pairs are disulfide-bonded: cysteine 212/cysteine 217, cysteine 235/cysteine 868, cysteine 243/cysteine 828, cysteine 299/cysteine 548, and cysteine 757/cysteine 880. Asparagine 279, asparagine 283, asparagine 324, asparagine 384, asparagine 429, asparagine 496, and asparagine 652 each carry an N-linked (GlcNAc...) asparagine glycan. Residue histidine 720 coordinates Zn(2+). Glutamate 721 is an active-site residue. Zn(2+) is bound at residue histidine 724. Residues asparagine 745 and asparagine 753 are each glycosylated (N-linked (GlcNAc...) asparagine). Glutamate 780 contributes to the Zn(2+) binding site. The active-site Proton donor is aspartate 784.

In the N-terminal section; belongs to the methyltransferase superfamily. The protein in the C-terminal section; belongs to the peptidase M13 family. It depends on Zn(2+) as a cofactor.

The protein resides in the golgi apparatus membrane. It localises to the cytoplasmic vesicle. It is found in the secretory vesicle membrane. It catalyses the reaction Hydrolysis of the 21-Trp-|-Val-22 bond in big endothelin to form endothelin 1.. With respect to regulation, inhibited by phosphoramidon. In terms of biological role, converts big endothelin-1 to endothelin-1. May also have methyltransferase activity. May play a role in amyloid-beta processing. The polypeptide is EEF1AKMT4-ECE2 readthrough transcript protein (Homo sapiens (Human)).